A 172-amino-acid polypeptide reads, in one-letter code: ATP synthase subunit b (172 aa).

A helical transmembrane segment spans residues 11-30; it reads LIAQIINFVIVLWVLNRFAF.

The protein belongs to the ATPase B chain family. F-type ATPases have 2 components, F(1) - the catalytic core - and F(0) - the membrane proton channel. F(1) has five subunits: alpha(3), beta(3), gamma(1), delta(1), epsilon(1). F(0) has three main subunits: a(1), b(2) and c(10-14). The alpha and beta chains form an alternating ring which encloses part of the gamma chain. F(1) is attached to F(0) by a central stalk formed by the gamma and epsilon chains, while a peripheral stalk is formed by the delta and b chains.

It localises to the cell inner membrane. Its function is as follows. F(1)F(0) ATP synthase produces ATP from ADP in the presence of a proton or sodium gradient. F-type ATPases consist of two structural domains, F(1) containing the extramembraneous catalytic core and F(0) containing the membrane proton channel, linked together by a central stalk and a peripheral stalk. During catalysis, ATP synthesis in the catalytic domain of F(1) is coupled via a rotary mechanism of the central stalk subunits to proton translocation. Component of the F(0) channel, it forms part of the peripheral stalk, linking F(1) to F(0). This Methylacidiphilum infernorum (isolate V4) (Methylokorus infernorum (strain V4)) protein is ATP synthase subunit b.